The sequence spans 355 residues: Chorismate synthase (355 aa).

Arg-48 lines the NADP(+) pocket. FMN-binding positions include 126 to 128 (RSS), Gly-278, 293 to 297 (KPIPS), and Arg-319.

It belongs to the chorismate synthase family. As to quaternary structure, homotetramer. FMNH2 is required as a cofactor.

The catalysed reaction is 5-O-(1-carboxyvinyl)-3-phosphoshikimate = chorismate + phosphate. It participates in metabolic intermediate biosynthesis; chorismate biosynthesis; chorismate from D-erythrose 4-phosphate and phosphoenolpyruvate: step 7/7. In terms of biological role, catalyzes the anti-1,4-elimination of the C-3 phosphate and the C-6 proR hydrogen from 5-enolpyruvylshikimate-3-phosphate (EPSP) to yield chorismate, which is the branch point compound that serves as the starting substrate for the three terminal pathways of aromatic amino acid biosynthesis. This reaction introduces a second double bond into the aromatic ring system. This is Chorismate synthase from Oleidesulfovibrio alaskensis (strain ATCC BAA-1058 / DSM 17464 / G20) (Desulfovibrio alaskensis).